Reading from the N-terminus, the 198-residue chain is Outer-membrane lipoprotein carrier protein (198 aa).

An N-terminal signal peptide occupies residues 1 to 17 (MKKFLFSLCLLSSTVLA).

It belongs to the LolA family. Monomer.

The protein localises to the periplasm. In terms of biological role, participates in the translocation of lipoproteins from the inner membrane to the outer membrane. Only forms a complex with a lipoprotein if the residue after the N-terminal Cys is not an aspartate (The Asp acts as a targeting signal to indicate that the lipoprotein should stay in the inner membrane). This chain is Outer-membrane lipoprotein carrier protein, found in Aliivibrio fischeri (strain ATCC 700601 / ES114) (Vibrio fischeri).